A 429-amino-acid polypeptide reads, in one-letter code: Ribosomal RNA small subunit methyltransferase B (429 aa).

S-adenosyl-L-methionine-binding positions include 254–260 (CAAPGGK), Asp-277, Asp-303, and Asp-322. Cys-375 serves as the catalytic Nucleophile.

It belongs to the class I-like SAM-binding methyltransferase superfamily. RsmB/NOP family.

The protein resides in the cytoplasm. It catalyses the reaction cytidine(967) in 16S rRNA + S-adenosyl-L-methionine = 5-methylcytidine(967) in 16S rRNA + S-adenosyl-L-homocysteine + H(+). Its function is as follows. Specifically methylates the cytosine at position 967 (m5C967) of 16S rRNA. The protein is Ribosomal RNA small subunit methyltransferase B of Escherichia coli O157:H7.